The sequence spans 109 residues: Aquaporin-2 (109 aa).

Residues 1–6 lie on the Cytoplasmic side of the membrane; it reads SVAFSR. A helical transmembrane segment spans residues 7–27; it reads AVFAEFLATLLFVFFGLGSAL. Residues 28-35 lie on the Extracellular side of the membrane; sequence NWPQALPS. A helical transmembrane segment spans residues 36–54; the sequence is VLQIAMAFGLGIGTLVQAL. Over 55 to 59 the chain is Cytoplasmic; it reads GHVSG. Positions 60 to 69 form an intramembrane region, discontinuously helical; it reads AHINPAVTVA. Positions 63 to 65 match the NPA 1 motif; the sequence is NPA. The Cytoplasmic segment spans residues 70–80; the sequence is CLVGCHVSFLR. Residues 81–102 form a helical membrane-spanning segment; it reads AAFYVAAQLLGAVAGAALLHEI. Topologically, residues 103-109 are extracellular; the sequence is TPPHVRG.

This sequence belongs to the MIP/aquaporin (TC 1.A.8) family. In terms of assembly, homotetramer. Serine phosphorylation is necessary and sufficient for expression at the apical membrane. Endocytosis is not phosphorylation-dependent. In terms of processing, N-glycosylated.

The protein resides in the apical cell membrane. Its subcellular location is the basolateral cell membrane. The protein localises to the cell membrane. It localises to the cytoplasmic vesicle membrane. It is found in the golgi apparatus. The protein resides in the trans-Golgi network membrane. It catalyses the reaction H2O(in) = H2O(out). The enzyme catalyses glycerol(in) = glycerol(out). In terms of biological role, forms a water-specific channel that provides the plasma membranes of renal collecting duct with high permeability to water, thereby permitting water to move in the direction of an osmotic gradient. Plays an essential role in renal water homeostasis. Could also be permeable to glycerol. The sequence is that of Aquaporin-2 from Canis lupus familiaris (Dog).